The sequence spans 251 residues: Ubiquinone/menaquinone biosynthesis C-methyltransferase UbiE (251 aa).

S-adenosyl-L-methionine contacts are provided by residues Thr-74, Asp-95, and 123–124 (NA).

This sequence belongs to the class I-like SAM-binding methyltransferase superfamily. MenG/UbiE family.

The enzyme catalyses a 2-demethylmenaquinol + S-adenosyl-L-methionine = a menaquinol + S-adenosyl-L-homocysteine + H(+). The catalysed reaction is a 2-methoxy-6-(all-trans-polyprenyl)benzene-1,4-diol + S-adenosyl-L-methionine = a 5-methoxy-2-methyl-3-(all-trans-polyprenyl)benzene-1,4-diol + S-adenosyl-L-homocysteine + H(+). It participates in quinol/quinone metabolism; menaquinone biosynthesis; menaquinol from 1,4-dihydroxy-2-naphthoate: step 2/2. The protein operates within cofactor biosynthesis; ubiquinone biosynthesis. In terms of biological role, methyltransferase required for the conversion of demethylmenaquinol (DMKH2) to menaquinol (MKH2) and the conversion of 2-polyprenyl-6-methoxy-1,4-benzoquinol (DDMQH2) to 2-polyprenyl-3-methyl-6-methoxy-1,4-benzoquinol (DMQH2). The polypeptide is Ubiquinone/menaquinone biosynthesis C-methyltransferase UbiE (Shewanella putrefaciens (strain CN-32 / ATCC BAA-453)).